Reading from the N-terminus, the 273-residue chain is Homeobox protein HMX2 (273 aa).

Positions 1–152 (MGSKEDAGKG…RQAGAAKKKT (152 aa)) are disordered. Gly residues predominate over residues 93–102 (KGSGGSGPGG). Over residues 114-123 (SDFKEEKERL) the composition is skewed to basic and acidic residues. The segment at residues 149-208 (KKKTRTVFSRSQVYQLESTFDMKRYLSSSERACLASSLQLTETQVKTWFQNRRNKWKRQL) is a DNA-binding region (homeobox).

This sequence belongs to the HMX homeobox family.

Its subcellular location is the nucleus. Functionally, transcription factor involved in specification of neuronal cell types and which is required for inner ear and hypothalamus development. In Homo sapiens (Human), this protein is Homeobox protein HMX2 (HMX2).